Here is a 212-residue protein sequence, read N- to C-terminus: Small ribosomal subunit protein uS2 (212 aa).

A disordered region spans residues 190-212 (LSPDAPEDQPAPVSEFETKVKMV).

Belongs to the universal ribosomal protein uS2 family.

The chain is Small ribosomal subunit protein uS2 from Ignicoccus hospitalis (strain KIN4/I / DSM 18386 / JCM 14125).